The following is a 776-amino-acid chain: Protein translocase subunit SecA 2 (776 aa).

ATP is bound by residues Gln80, 98 to 102 (GEGKT), and Asp486.

It belongs to the SecA family. In terms of assembly, monomer and homodimer. Part of the essential Sec protein translocation apparatus which comprises SecA, SecYEG and auxiliary proteins SecDF. Other proteins may also be involved.

The protein localises to the cell membrane. Its subcellular location is the cytoplasm. The catalysed reaction is ATP + H2O + cellular proteinSide 1 = ADP + phosphate + cellular proteinSide 2.. Part of the Sec protein translocase complex. Interacts with the SecYEG preprotein conducting channel. Has a central role in coupling the hydrolysis of ATP to the transfer of proteins into and across the cell membrane, serving as an ATP-driven molecular motor driving the stepwise translocation of polypeptide chains across the membrane. This chain is Protein translocase subunit SecA 2, found in Listeria monocytogenes serotype 1/2a (strain 10403S).